Reading from the N-terminus, the 206-residue chain is Large ribosomal subunit protein uL4 (206 aa).

A disordered region spans residues 46–78 (GNRAQKDREQVKHTTKKPWRQKGTGRARAGMSS). The span at 58-70 (HTTKKPWRQKGTG) shows a compositional bias: basic residues.

It belongs to the universal ribosomal protein uL4 family. As to quaternary structure, part of the 50S ribosomal subunit.

Its function is as follows. One of the primary rRNA binding proteins, this protein initially binds near the 5'-end of the 23S rRNA. It is important during the early stages of 50S assembly. It makes multiple contacts with different domains of the 23S rRNA in the assembled 50S subunit and ribosome. Functionally, forms part of the polypeptide exit tunnel. This is Large ribosomal subunit protein uL4 from Burkholderia lata (strain ATCC 17760 / DSM 23089 / LMG 22485 / NCIMB 9086 / R18194 / 383).